Here is a 255-residue protein sequence, read N- to C-terminus: Indole-3-glycerol phosphate synthase (255 aa).

This sequence belongs to the TrpC family.

It catalyses the reaction 1-(2-carboxyphenylamino)-1-deoxy-D-ribulose 5-phosphate + H(+) = (1S,2R)-1-C-(indol-3-yl)glycerol 3-phosphate + CO2 + H2O. It functions in the pathway amino-acid biosynthesis; L-tryptophan biosynthesis; L-tryptophan from chorismate: step 4/5. The chain is Indole-3-glycerol phosphate synthase from Streptococcus thermophilus (strain ATCC BAA-250 / LMG 18311).